An 874-amino-acid polypeptide reads, in one-letter code: Alanine--tRNA ligase (874 aa).

Positions 562, 566, 663, and 667 each coordinate Zn(2+).

It belongs to the class-II aminoacyl-tRNA synthetase family. Zn(2+) serves as cofactor.

It is found in the cytoplasm. It catalyses the reaction tRNA(Ala) + L-alanine + ATP = L-alanyl-tRNA(Ala) + AMP + diphosphate. Catalyzes the attachment of alanine to tRNA(Ala) in a two-step reaction: alanine is first activated by ATP to form Ala-AMP and then transferred to the acceptor end of tRNA(Ala). Also edits incorrectly charged Ser-tRNA(Ala) and Gly-tRNA(Ala) via its editing domain. This is Alanine--tRNA ligase from Bordetella pertussis (strain Tohama I / ATCC BAA-589 / NCTC 13251).